A 233-amino-acid chain; its full sequence is Superoxide dismutase [Mn] 3.4, mitochondrial (233 aa).

The N-terminal 29 residues, 1 to 29, are a transit peptide targeting the mitochondrion; the sequence is MALRTLASKNALSFALGGAARPSAASARG. Mn(2+) contacts are provided by His57, His105, Asp194, and His198.

It belongs to the iron/manganese superoxide dismutase family. Homotetramer. It depends on Mn(2+) as a cofactor.

It is found in the mitochondrion matrix. The enzyme catalyses 2 superoxide + 2 H(+) = H2O2 + O2. In terms of biological role, destroys superoxide anion radicals which are normally produced within the cells and which are toxic to biological systems. This chain is Superoxide dismutase [Mn] 3.4, mitochondrial (SODA.3), found in Zea mays (Maize).